We begin with the raw amino-acid sequence, 100 residues long: Small ribosomal subunit protein uS14c (100 aa).

Belongs to the universal ribosomal protein uS14 family. Part of the 30S ribosomal subunit.

The protein localises to the plastid. It is found in the chloroplast. In terms of biological role, binds 16S rRNA, required for the assembly of 30S particles. This chain is Small ribosomal subunit protein uS14c, found in Eucalyptus globulus subsp. globulus (Tasmanian blue gum).